The sequence spans 612 residues: T-cell immunomodulatory protein (612 aa).

The first 33 residues, Met1 to Ala33, serve as a signal peptide directing secretion. Asn36, Asn95, Asn139, Asn146, Asn151, Asn176, Asn188, Asn226, and Asn243 each carry an N-linked (GlcNAc...) asparagine glycan. The stretch at Val258–Val293 is one FG-GAP; atypical repeat. Residues Asn353, Asn371, and Asn482 are each glycosylated (N-linked (GlcNAc...) asparagine). The helical transmembrane segment at Val567–Ile587 threads the bilayer.

The protein belongs to the TIP family. In terms of assembly, interacts with RUVBL1, RUVBL2 and alpha-tubulin. As to expression, ubiquitously expressed.

Its subcellular location is the secreted. The protein localises to the membrane. Modulator of T-cell function. Has a protective effect in graft versus host disease model. The chain is T-cell immunomodulatory protein from Homo sapiens (Human).